Consider the following 146-residue polypeptide: Peptidyl-lysine N-acetyltransferase YiaC (146 aa).

The 143-residue stretch at methionine 1–valine 143 folds into the N-acetyltransferase domain.

This sequence belongs to the acetyltransferase family.

The enzyme catalyses L-lysyl-[protein] + acetyl-CoA = N(6)-acetyl-L-lysyl-[protein] + CoA + H(+). In terms of biological role, N-epsilon-lysine acetyltransferase that catalyzes acetylation of a large number of proteins. Overexpression inhibits motility. The sequence is that of Peptidyl-lysine N-acetyltransferase YiaC (yiaC) from Escherichia coli (strain K12).